The primary structure comprises 399 residues: S-adenosylmethionine synthase (399 aa).

An ATP-binding site is contributed by His-17. Residue Asp-19 participates in Mg(2+) binding. Glu-45 is a K(+) binding site. L-methionine-binding residues include Glu-58 and Gln-101. The flexible loop stretch occupies residues 101-111; sequence QSPDIAQGVDE. ATP is bound by residues 177–179, 244–245, Asp-253, 259–260, Ala-276, and Lys-280; these read DAK, RF, and RK. L-methionine is bound at residue Asp-253. Lys-284 lines the L-methionine pocket.

The protein belongs to the AdoMet synthase family. Homotetramer; dimer of dimers. The cofactor is Mg(2+). K(+) serves as cofactor.

It is found in the cytoplasm. The catalysed reaction is L-methionine + ATP + H2O = S-adenosyl-L-methionine + phosphate + diphosphate. Its pathway is amino-acid biosynthesis; S-adenosyl-L-methionine biosynthesis; S-adenosyl-L-methionine from L-methionine: step 1/1. In terms of biological role, catalyzes the formation of S-adenosylmethionine (AdoMet) from methionine and ATP. The overall synthetic reaction is composed of two sequential steps, AdoMet formation and the subsequent tripolyphosphate hydrolysis which occurs prior to release of AdoMet from the enzyme. The protein is S-adenosylmethionine synthase of Listeria innocua serovar 6a (strain ATCC BAA-680 / CLIP 11262).